A 492-amino-acid chain; its full sequence is Steroid 21-hydroxylase (492 aa).

2 residues coordinate heme b: Arg91 and Lys120. Arg231 serves as a coordination point for 17alpha-hydroxyprogesterone. A progesterone-binding site is contributed by Arg231. Residues His363, Arg424, and Cys426 each coordinate heme b.

The protein belongs to the cytochrome P450 family. Requires heme b as cofactor.

The protein localises to the endoplasmic reticulum membrane. It localises to the microsome membrane. It carries out the reaction 17alpha-hydroxyprogesterone + reduced [NADPH--hemoprotein reductase] + O2 = 11-deoxycortisol + oxidized [NADPH--hemoprotein reductase] + H2O + H(+). The enzyme catalyses progesterone + reduced [NADPH--hemoprotein reductase] + O2 = 21-hydroxyprogesterone + oxidized [NADPH--hemoprotein reductase] + H2O + H(+). Its function is as follows. Specifically catalyzes the 21-hydroxylation of steroids. Required for the adrenal synthesis of mineralocorticoids and glucocorticoids. In Canis lupus familiaris (Dog), this protein is Steroid 21-hydroxylase (CYP21).